The following is a 372-amino-acid chain: Protein RecA (372 aa).

77-84 (GPESSGKT) is an ATP binding site.

Belongs to the RecA family.

Its subcellular location is the cytoplasm. Can catalyze the hydrolysis of ATP in the presence of single-stranded DNA, the ATP-dependent uptake of single-stranded DNA by duplex DNA, and the ATP-dependent hybridization of homologous single-stranded DNAs. It interacts with LexA causing its activation and leading to its autocatalytic cleavage. The protein is Protein RecA of Corynebacterium diphtheriae (strain ATCC 700971 / NCTC 13129 / Biotype gravis).